The primary structure comprises 877 residues: MNEKYAALRANVGMLGQLLGKSIKDHQGQAFLDKIETIRQLAKSSRKGNETDRERLLDTLRNLSDDELLPVARAFSQFLNLANVAEQFHTISRRCEEQVCTPDPLEQMFDKLKASNLSQEAIIQAVRELDIDLVLTAHPTEVTRRTLIHKHVQLNDCLEALELSDLLPRERDKILNRIEQLVNQAWHTNEIREQRPTPVDEAKWGFAVVENSLWPAIPEFMRNLDERLQHHLGVRLPLDAAPVKFTSWMGGDRDGNPFVTAKVTAEVLELGRWMAVSLFYKDIKELTSELSMSDCTDAVRERVGDHPEPYRALVRELREQLRETQEFLTAKVQGQASESRDLVKTTAQLREPLELCYHSLHACGMGNIADGMLLDVLRKLACFGIHLVKLDIRQDGERHGQVFSELTRYLGMGDYAEWSEDDKQAFLLNELNSRRPLIPTDWEPSDETRETLDTCKVIAQHDPDAFGIYIISMAGAPSDVLAVQLLLKEAGCKFRMPVAPLFETQEDLMAGTAVMERLLSVDWYRGYIQGRQYVMIGYSDSAKDAGMMAAGWAQYAAMESLVALAEANNLRLTLFHGRGGTVGRGGAPAHQAILSQPPGSLRGGLRVTEQGEMIRFKFGLPKVAIQSLNLYTSAVLEGNLLPPPKPKECWRAVMEQLASVSCDHYRSIVRGHPDFVPYFRAATPEMELGKLPLGSRPSKRKPNGGVESLRAIPWIFAWTQNRLMLPAWLGAHKGLQQAIADGQKGVLEEMSRQWPFFRTRLEMLEMVFLKADVWLAEYYDTRLVPKELWGLGKQLRQELADSIQVVLELRPQGDLLDDQPWIKESIKLRNPYTDPLNVLQVELLGRSRNHAETLHPELDQALMVTIAGIAAGMRNTG.

Active-site residues include His138 and Lys543.

This sequence belongs to the PEPCase type 1 family. Mg(2+) is required as a cofactor.

The enzyme catalyses oxaloacetate + phosphate = phosphoenolpyruvate + hydrogencarbonate. Its function is as follows. Forms oxaloacetate, a four-carbon dicarboxylic acid source for the tricarboxylic acid cycle. The polypeptide is Phosphoenolpyruvate carboxylase (Aeromonas hydrophila subsp. hydrophila (strain ATCC 7966 / DSM 30187 / BCRC 13018 / CCUG 14551 / JCM 1027 / KCTC 2358 / NCIMB 9240 / NCTC 8049)).